A 717-amino-acid chain; its full sequence is Photosystem I P700 chlorophyll a apoprotein A1 (717 aa).

A run of 8 helical transmembrane segments spans residues 59–82 (VFRA…FHGA), 145–168 (LYCT…FHYH), 184–208 (LNHH…HVSL), 280–298 (TAHH…GHMY), 335–358 (WHAQ…HHMY), 374–400 (LSLF…IFMV), 422–444 (AIVS…LYIH), and 520–538 (FLVH…LILL). C562 and C571 together coordinate [4Fe-4S] cluster. The next 2 helical transmembrane spans lie at 578–599 (HVFL…HFSW) and 653–675 (LSAY…MFLF). Residue H664 participates in chlorophyll a' binding. M672 and Y680 together coordinate chlorophyll a. W681 lines the phylloquinone pocket. The helical transmembrane segment at 713-717 (AVGVA) threads the bilayer.

Belongs to the PsaA/PsaB family. The PsaA/B heterodimer binds the P700 chlorophyll special pair and subsequent electron acceptors. PSI consists of a core antenna complex that captures photons, and an electron transfer chain that converts photonic excitation into a charge separation. The eukaryotic PSI reaction center is composed of at least 11 subunits. It depends on P700 is a chlorophyll a/chlorophyll a' dimer, A0 is one or more chlorophyll a, A1 is one or both phylloquinones and FX is a shared 4Fe-4S iron-sulfur center. as a cofactor.

It localises to the plastid. The protein localises to the chloroplast thylakoid membrane. It carries out the reaction reduced [plastocyanin] + hnu + oxidized [2Fe-2S]-[ferredoxin] = oxidized [plastocyanin] + reduced [2Fe-2S]-[ferredoxin]. Its function is as follows. PsaA and PsaB bind P700, the primary electron donor of photosystem I (PSI), as well as the electron acceptors A0, A1 and FX. PSI is a plastocyanin-ferredoxin oxidoreductase, converting photonic excitation into a charge separation, which transfers an electron from the donor P700 chlorophyll pair to the spectroscopically characterized acceptors A0, A1, FX, FA and FB in turn. Oxidized P700 is reduced on the lumenal side of the thylakoid membrane by plastocyanin. The protein is Photosystem I P700 chlorophyll a apoprotein A1 of Cycas revoluta (Sago palm).